Consider the following 122-residue polypeptide: Transcription initiation factor IIA subunit 2 (122 aa).

Residues serine 95 and serine 102 each carry the phosphoserine modification.

The protein belongs to the TFIIA subunit 2 family. TFIIA is a heterodimer composed of the large TOA1 and a small TOA2 subunits. Interacts with TBP. Interacts with TAF11. Interacts with KAP122.

The protein localises to the cytoplasm. It is found in the nucleus. TFIIA is a component of the transcription machinery of RNA polymerase II and plays an important role in transcriptional activation. TFIIA in a complex with TBP mediates transcriptional activity. The sequence is that of Transcription initiation factor IIA subunit 2 (TOA2) from Saccharomyces cerevisiae (strain ATCC 204508 / S288c) (Baker's yeast).